Here is a 1309-residue protein sequence, read N- to C-terminus: Angiotensin-converting enzyme (1309 aa).

An N-terminal signal peptide occupies residues 1-33 (MGAASGCRWPWPPLLPLLLMLLLPPPPLPVALA). Topologically, residues 34-1259 (LDSALQPGNF…GLNLEEQQAR (1226 aa)) are extracellular. Residues Asn-42, Asn-58, Asn-78, Asn-115, Asn-135, Asn-150, and Asn-164 are each glycosylated (N-linked (GlcNAc...) asparagine). Peptidase M2 domains follow at residues 44–627 (TADE…LGWP) and 646–1225 (VSDE…LGWP). An intrachain disulfide couples Cys-161 to Cys-169. Tyr-235 provides a ligand contact to chloride. N-linked (GlcNAc...) asparagine glycosylation occurs at Asn-322. Cys-363 and Cys-381 are joined by a disulfide. His-394 contributes to the Zn(2+) binding site. The active-site Proton acceptor 1 is the Glu-395. His-398 and Glu-422 together coordinate Zn(2+). Asn-512 carries N-linked (GlcNAc...) asparagine glycosylation. His-523 functions as the Proton donor 1 in the catalytic mechanism. Asn-526 is a glycosylation site (N-linked (GlcNAc...) asparagine). Arg-532 serves as a coordination point for chloride. A disulfide bridge links Cys-548 with Cys-560. N-linked (GlcNAc...) asparagine glycans are attached at residues Asn-680, Asn-698, Asn-717, and Asn-763. The cysteines at positions 760 and 766 are disulfide-linked. Chloride is bound by residues Arg-794 and Tyr-832. N-linked (GlcNAc...) asparagine glycosylation occurs at Asn-945. Cys-960 and Cys-978 are oxidised to a cystine. His-991 provides a ligand contact to Zn(2+). Glu-992 acts as the Proton acceptor 2 in catalysis. His-995 and Glu-1019 together coordinate Zn(2+). Positions 1093 and 1097 each coordinate chloride. The active-site Proton donor 2 is the His-1121. Chloride is bound at residue Arg-1130. Cys-1146 and Cys-1158 are disulfide-bonded. 2 N-linked (GlcNAc...) asparagine glycosylation sites follow: Asn-1194 and Asn-1228. Residues 1218–1259 (HGEKLGWPQYNWTPNSARLEGSFAGTGRVNFLGLNLEEQQAR) form a juxtamembrane stalk region. The chain crosses the membrane as a helical span at residues 1260 to 1280 (VGQWVLLFLGVTLLVATMGLT). Over 1281–1309 (QRLFSIRHQILRRTHRGPQFGSEVELRHS) the chain is Cytoplasmic. A Phosphoserine modification is found at Ser-1302.

It belongs to the peptidase M2 family. Monomer and homodimer; homodimerizes following binding to an inhibitor. Interacts with calmodulin (CALM1, CALM2 or CALM3); interaction takes place in the cytoplasmic region and regulates phosphorylation and proteolytic cleavage. The cofactor is Zn(2+). Chloride serves as cofactor. In terms of processing, produced following proteolytic cleavage by secretase enzymes that cleave the transmembrane form in the juxtamembrane stalk region upstream of the transmembrane region. Cleavage can take place at different sites of the juxtamembrane stalk region. Phosphorylated by CK2 on Ser-1302; which allows membrane retention. Phosphorylated on tyrosine residues on its extracellular part, promoting cleavage by secretase enzymes and formation of the soluble form (Angiotensin-converting enzyme, soluble form).

It is found in the cell membrane. The protein localises to the cytoplasm. It localises to the secreted. It carries out the reaction Release of a C-terminal dipeptide, oligopeptide-|-Xaa-Yaa, when Xaa is not Pro, and Yaa is neither Asp nor Glu. Thus, conversion of angiotensin I to angiotensin II, with increase in vasoconstrictor activity, but no action on angiotensin II.. It catalyses the reaction angiotensin I + H2O = L-histidyl-L-leucine + angiotensin II. The enzyme catalyses bradykinin + H2O = L-Phe-L-Arg + bradykinin(1-7). The catalysed reaction is substance P + H2O = substance P(1-9) + L-Leu-L-Met-NH2. It carries out the reaction substance P + H2O = substance P(1-8) + Gly-L-Leu-L-Met-NH2. It catalyses the reaction substance P + H2O = L-Phe-L-Phe-Gly-L-Leu-L-Met-NH2 + substance P(1-6). The enzyme catalyses neurotensin + H2O = neurotensin(1-11) + L-isoleucyl-L-leucine. The catalysed reaction is goralatide + H2O = N-acetyl-L-seryl-L-aspartate + L-lysyl-L-proline. It carries out the reaction Met-enkephalin + H2O = L-phenylalanyl-L-methionine + L-tyrosylglycylglycine. It catalyses the reaction Leu-enkephalin + H2O = L-tyrosylglycylglycine + L-phenylalanyl-L-leucine. The enzyme catalyses Met-enkephalin-Arg-Phe + H2O = L-arginyl-L-phenylalanine + Met-enkephalin. The dipeptidyl carboxypeptidase activity is strongly activated by chloride. The dipeptidyl carboxypeptidase activity is specifically inhibited by lisinopril, captopril and enalaprilat. In terms of biological role, dipeptidyl carboxypeptidase that removes dipeptides from the C-terminus of a variety of circulating hormones, such as angiotensin I, bradykinin or enkephalins, thereby playing a key role in the regulation of blood pressure, electrolyte homeostasis or synaptic plasticity. Composed of two similar catalytic domains, each possessing a functional active site, with different selectivity for substrates. Plays a major role in the angiotensin-renin system that regulates blood pressure and sodium retention by the kidney by converting angiotensin I to angiotensin II, resulting in an increase of the vasoconstrictor activity of angiotensin. Also able to inactivate bradykinin, a potent vasodilator, and therefore enhance the blood pressure response. Acts as a regulator of synaptic transmission by mediating cleavage of neuropeptide hormones, such as substance P, neurotensin or enkephalins. Catalyzes degradation of different enkephalin neuropeptides (Met-enkephalin, Leu-enkephalin, Met-enkephalin-Arg-Phe and possibly Met-enkephalin-Arg-Gly-Leu). Acts as a regulator of synaptic plasticity in the nucleus accumbens of the brain by mediating cleavage of Met-enkephalin-Arg-Phe, a strong ligand of Mu-type opioid receptor OPRM1, into Met-enkephalin. Met-enkephalin-Arg-Phe cleavage by ACE decreases activation of OPRM1, leading to long-term synaptic potentiation of glutamate release. Also acts as a regulator of hematopoietic stem cell differentiation by mediating degradation of hemoregulatory peptide N-acetyl-SDKP (AcSDKP). Acts as a regulator of cannabinoid signaling pathway by mediating degradation of hemopressin, an antagonist peptide of the cannabinoid receptor CNR1. Involved in amyloid-beta metabolism by catalyzing degradation of Amyloid-beta protein 40 and Amyloid-beta protein 42 peptides, thereby preventing plaque formation. Catalyzes cleavage of cholecystokinin (maturation of Cholecystokinin-8 and Cholecystokinin-5) and Gonadoliberin-1 (both maturation and degradation) hormones. Degradation of hemoregulatory peptide N-acetyl-SDKP (AcSDKP) and amyloid-beta proteins is mediated by the N-terminal catalytic domain, while angiotensin I and cholecystokinin cleavage is mediated by the C-terminal catalytic region. Soluble form that is released in blood plasma and other body fluids following proteolytic cleavage in the juxtamembrane stalk region. This chain is Angiotensin-converting enzyme, found in Sus scrofa (Pig).